Here is a 262-residue protein sequence, read N- to C-terminus: Spindlin-1 (262 aa).

Residues 1-51 (MKTPFGKTPGQRSRADAGHAGVSANMMKKRTSHKKHRSSVGPSKPVSQPRR) are disordered. Glycyl lysine isopeptide (Lys-Gly) (interchain with G-Cter in SUMO2) cross-links involve residues K7 and K28. Over residues 27–38 (MKKRTSHKKHRS) the composition is skewed to basic residues. K44 is modified (N6-acetyllysine; alternate). Residue K44 forms a Glycyl lysine isopeptide (Lys-Gly) (interchain with G-Cter in SUMO2); alternate linkage. The interval 53 to 116 (IVGCRIQHGW…RVSALEVLPD (64 aa)) is tudor-like domain 1. The interval 93–98 (GFDCVY) is histone H3K4me3 and H3R8me2a binding. Phosphoserine; by AURKA is present on residues S109 and S124. Residues 132 to 193 (MIGKAVEHMF…DYKEGDLRIM (62 aa)) are tudor-like domain 2. Residue E142 is a region of interest, histone H3K4me3 and H3R8me2a binding. A Phosphoserine modification is found at S199. A tudor-like domain 3 region spans residues 213–262 (LVGKQVEYAKEDGSKRTGMVIHQVEAKPSVYFIKFDDDFHIYVYDLVKTS). The segment at 250–252 (DFH) is histone H3K4me3 and H3R8me2a binding.

Belongs to the SPIN/STSY family. As to quaternary structure, homodimer; may form higher-order oligomers. Interacts with TCF7L2/TCF4; the interaction is direct. Interacts with HABP4 and SERBP1. Interacts with SPINDOC; SPINDOC stabilizes SPIN1 and enhances its association with bivalent H3K4me3K9me3 mark. Interacts with SPOCD1; promoting recruitment of PIWIL4 and SPOCD1 to transposons. Phosphorylated during oocyte meiotic maturation. Highly expressed in ovarian cancer tissues.

The protein resides in the nucleus. Its subcellular location is the nucleolus. Functionally, chromatin reader that specifically recognizes and binds histone H3 both trimethylated at 'Lys-4' and 'Lys-9' (H3K4me3K9me3) and is involved in piRNA-mediated retrotransposon silencing during spermatogenesis. Plays a key role in the initiation of the PIWIL4-piRNA pathway, a pathway that directs transposon DNA methylation and silencing in the male embryonic germ cells, by promoting recruitment of DNA methylation machinery to transposons: binds young, but not old, LINE1 transposons, which are specifically marked with H3K4me3K9me3, and promotes the recruitment of PIWIL4 and SPOCD1 to transposons, leading to piRNA-directed DNA methylation. Also recognizes and binds histone H3 both trimethylated at 'Lys-4' and asymmetrically dimethylated at 'Arg-8' (H3K4me3 and H3R8me2a) and acts as an activator of Wnt signaling pathway downstream of PRMT2. In case of cancer, promotes cell cancer proliferation via activation of the Wnt signaling pathway. Overexpression induces metaphase arrest and chromosomal instability. Localizes to active rDNA loci and promotes the expression of rRNA genes. May play a role in cell-cycle regulation during the transition from gamete to embryo. Involved in oocyte meiotic resumption, a process that takes place before ovulation to resume meiosis of oocytes blocked in prophase I: may act by regulating maternal transcripts to control meiotic resumption. This chain is Spindlin-1, found in Homo sapiens (Human).